Consider the following 443-residue polypeptide: ATP-dependent protease ATPase subunit HslU (443 aa).

ATP is bound by residues Ile-18, 60–65 (GVGKTE), Asp-256, Glu-321, and Arg-393.

Belongs to the ClpX chaperone family. HslU subfamily. In terms of assembly, a double ring-shaped homohexamer of HslV is capped on each side by a ring-shaped HslU homohexamer. The assembly of the HslU/HslV complex is dependent on binding of ATP.

Its subcellular location is the cytoplasm. In terms of biological role, ATPase subunit of a proteasome-like degradation complex; this subunit has chaperone activity. The binding of ATP and its subsequent hydrolysis by HslU are essential for unfolding of protein substrates subsequently hydrolyzed by HslV. HslU recognizes the N-terminal part of its protein substrates and unfolds these before they are guided to HslV for hydrolysis. The chain is ATP-dependent protease ATPase subunit HslU from Enterobacter sp. (strain 638).